The sequence spans 60 residues: Large ribosomal subunit protein bL32 (60 aa).

Residues 1–16 are compositionally biased toward basic residues; that stretch reads MAVPKRKTSPSKRGMR. The disordered stretch occupies residues 1–60; sequence MAVPKRKTSPSKRGMRRSADALKAPTYVEDKNSGELRRPHHVDLKTGMYRGRQVLEPKEA. The span at 28–44 shows a compositional bias: basic and acidic residues; sequence VEDKNSGELRRPHHVDL.

Belongs to the bacterial ribosomal protein bL32 family.

In Chelativorans sp. (strain BNC1), this protein is Large ribosomal subunit protein bL32.